A 202-amino-acid polypeptide reads, in one-letter code: NAD(P)H dehydrogenase (quinone) (202 aa).

The 187-residue stretch at 7–193 (VLVLYYSMYG…TIARFQGRHF (187 aa)) folds into the Flavodoxin-like domain. FMN contacts are provided by residues 13-18 (SMYGHI) and 82-84 (TRF). Y15 contributes to the NAD(+) binding site. Position 102 (W102) interacts with substrate. FMN contacts are provided by residues 117-122 (STATGG) and H137.

The protein belongs to the WrbA family. FMN serves as cofactor.

It catalyses the reaction a quinone + NADH + H(+) = a quinol + NAD(+). The enzyme catalyses a quinone + NADPH + H(+) = a quinol + NADP(+). The chain is NAD(P)H dehydrogenase (quinone) from Rhodospirillum rubrum (strain ATCC 11170 / ATH 1.1.1 / DSM 467 / LMG 4362 / NCIMB 8255 / S1).